Consider the following 433-residue polypeptide: ATP-dependent RNA helicase DBP8 (433 aa).

Positions 1–29 (MSFKDLGVSKWLLEALAAMKIRSPTSIQA) match the Q motif motif. Positions 32 to 208 (IPQILAGRDC…DKPVPEGKKP (177 aa)) constitute a Helicase ATP-binding domain. 45–52 (AKTGSGKT) lines the ATP pocket. The DEAD box motif lies at 154–157 (DEAD). The region spanning 247 to 387 (VSPKYEKASA…LLEEVNDDKI (141 aa)) is the Helicase C-terminal domain. Positions 401 to 427 (ESVADMEKEGFGEKRKINKRKREERTR) are enriched in basic and acidic residues. The disordered stretch occupies residues 401 to 433 (ESVADMEKEGFGEKRKINKRKREERTRDSKKRK).

It belongs to the DEAD box helicase family. DDX49/DBP8 subfamily.

It is found in the nucleus. It localises to the nucleolus. The catalysed reaction is ATP + H2O = ADP + phosphate + H(+). Its function is as follows. ATP-binding RNA helicase involved in 40S ribosomal subunit biogenesis and is required for the normal formation of 18S rRNAs through pre-rRNA processing at A0, A1 and A2 sites. Required for vegetative growth. In Meyerozyma guilliermondii (strain ATCC 6260 / CBS 566 / DSM 6381 / JCM 1539 / NBRC 10279 / NRRL Y-324) (Yeast), this protein is ATP-dependent RNA helicase DBP8 (DBP8).